The following is a 381-amino-acid chain: Phthiodiolone/phenolphthiodiolone dimycocerosates ketoreductase (381 aa).

The protein belongs to the mer family. Phthiodiolone/phenolphthiodiolone dimycocerosates ketoreductase subfamily.

Catalyzes the reduction of the keto moiety of phthiodiolone dimycocerosates (DIM B) and glycosylated phenolphthiodiolone dimycocerosates to form the intermediate compounds phthiotriol and glycosylated phenolphthiotriol dimycocerosates during phthiocerol dimycocerosates (DIM A) and glycosylated phenolphthiocerol dimycocerosates (PGL) biosynthesis. The sequence is that of Phthiodiolone/phenolphthiodiolone dimycocerosates ketoreductase from Mycobacterium bovis (strain ATCC BAA-935 / AF2122/97).